The sequence spans 392 residues: DNA replication and repair protein RecF (392 aa).

Position 30–37 (30–37 (GPNAAGKT)) interacts with ATP.

It belongs to the RecF family.

It localises to the cytoplasm. In terms of biological role, the RecF protein is involved in DNA metabolism; it is required for DNA replication and normal SOS inducibility. RecF binds preferentially to single-stranded, linear DNA. It also seems to bind ATP. In Chloroflexus aurantiacus (strain ATCC 29364 / DSM 637 / Y-400-fl), this protein is DNA replication and repair protein RecF.